An 808-amino-acid polypeptide reads, in one-letter code: Probable E3 ubiquitin-protein ligase MARCHF10 (808 aa).

Disordered stretches follow at residues leucine 33–proline 81, glutamine 101–serine 268, and serine 284–valine 415. Residues arginine 34–glutamine 49 are compositionally biased toward basic and acidic residues. Polar residues predominate over residues glutamine 237–serine 249. 2 stretches are compositionally biased toward basic and acidic residues: residues lysine 330 to proline 349 and leucine 379 to lysine 397. Residues aspartate 651–aspartate 721 form an RING-CH-type zinc finger. Cysteine 659, cysteine 662, cysteine 677, cysteine 679, histidine 687, cysteine 690, cysteine 711, and cysteine 714 together coordinate Zn(2+). The disordered stretch occupies residues glutamate 773 to valine 808.

The catalysed reaction is S-ubiquitinyl-[E2 ubiquitin-conjugating enzyme]-L-cysteine + [acceptor protein]-L-lysine = [E2 ubiquitin-conjugating enzyme]-L-cysteine + N(6)-ubiquitinyl-[acceptor protein]-L-lysine.. It functions in the pathway protein modification; protein ubiquitination. Its function is as follows. E3 ubiquitin-protein ligase. E3 ubiquitin ligases accept ubiquitin from an E2 ubiquitin-conjugating enzyme in the form of a thioester and then directly transfer the ubiquitin to targeted substrates. The polypeptide is Probable E3 ubiquitin-protein ligase MARCHF10 (Homo sapiens (Human)).